The primary structure comprises 461 residues: Cysteine--tRNA ligase (461 aa).

C29 lines the Zn(2+) pocket. The 'HIGH' region motif lies at 31 to 41 (MTVYDFCHIGH). Residues C210, H235, and E239 each coordinate Zn(2+). Positions 267–271 (KMSKS) match the 'KMSKS' region motif. K270 lines the ATP pocket.

It belongs to the class-I aminoacyl-tRNA synthetase family. As to quaternary structure, monomer. Zn(2+) is required as a cofactor.

It is found in the cytoplasm. It catalyses the reaction tRNA(Cys) + L-cysteine + ATP = L-cysteinyl-tRNA(Cys) + AMP + diphosphate. The sequence is that of Cysteine--tRNA ligase from Stutzerimonas stutzeri (strain A1501) (Pseudomonas stutzeri).